We begin with the raw amino-acid sequence, 307 residues long: Putative S-adenosyl-L-methionine-dependent methyltransferase MMAR_4570 (307 aa).

S-adenosyl-L-methionine contacts are provided by residues Asp128 and 157–158 (DL).

It belongs to the UPF0677 family.

Functionally, exhibits S-adenosyl-L-methionine-dependent methyltransferase activity. The chain is Putative S-adenosyl-L-methionine-dependent methyltransferase MMAR_4570 from Mycobacterium marinum (strain ATCC BAA-535 / M).